Here is a 230-residue protein sequence, read N- to C-terminus: Ribonuclease HII (230 aa).

Residues G21–G212 form the RNase H type-2 domain. Residues D27, E28, and D121 each contribute to the a divalent metal cation site.

Belongs to the RNase HII family. Mn(2+) is required as a cofactor. The cofactor is Mg(2+).

Its subcellular location is the cytoplasm. The catalysed reaction is Endonucleolytic cleavage to 5'-phosphomonoester.. Its function is as follows. Endonuclease that specifically degrades the RNA of RNA-DNA hybrids. The protein is Ribonuclease HII of Mycobacterium avium (strain 104).